A 511-amino-acid chain; its full sequence is Bifunctional purine biosynthesis protein PurH (511 aa).

Residues 1–146 (MGRLALISVT…KNFAHLTVIS (146 aa)) enclose the MGS-like domain.

This sequence belongs to the PurH family.

The enzyme catalyses (6R)-10-formyltetrahydrofolate + 5-amino-1-(5-phospho-beta-D-ribosyl)imidazole-4-carboxamide = 5-formamido-1-(5-phospho-D-ribosyl)imidazole-4-carboxamide + (6S)-5,6,7,8-tetrahydrofolate. It carries out the reaction IMP + H2O = 5-formamido-1-(5-phospho-D-ribosyl)imidazole-4-carboxamide. It functions in the pathway purine metabolism; IMP biosynthesis via de novo pathway; 5-formamido-1-(5-phospho-D-ribosyl)imidazole-4-carboxamide from 5-amino-1-(5-phospho-D-ribosyl)imidazole-4-carboxamide (10-formyl THF route): step 1/1. It participates in purine metabolism; IMP biosynthesis via de novo pathway; IMP from 5-formamido-1-(5-phospho-D-ribosyl)imidazole-4-carboxamide: step 1/1. This chain is Bifunctional purine biosynthesis protein PurH, found in Microcystis aeruginosa (strain NIES-843 / IAM M-2473).